The primary structure comprises 611 residues: UPF0508 protein SCY_3114 (611 aa).

It belongs to the UPF0508 family.

This Saccharomyces cerevisiae (strain YJM789) (Baker's yeast) protein is UPF0508 protein SCY_3114.